The following is a 102-amino-acid chain: 10 kDa heat shock protein, mitochondrial (102 aa).

The residue at position 2 (Ala-2) is an N-acetylalanine. The residue at position 8 (Lys-8) is an N6-acetyllysine. Lys-28 carries the N6-succinyllysine modification. Lys-40 is subject to N6-acetyllysine; alternate. Residues Lys-40, Lys-54, and Lys-56 each carry the N6-malonyllysine; alternate modification. 5 positions are modified to N6-succinyllysine; alternate: Lys-40, Lys-54, Lys-56, Lys-66, and Lys-70. Residues Lys-56, Lys-66, and Lys-70 each carry the N6-acetyllysine; alternate modification. Residue Thr-79 is modified to Phosphothreonine. N6-acetyllysine; alternate occurs at positions 80 and 86. Lys-80 and Lys-86 each carry N6-succinyllysine; alternate. N6-acetyllysine is present on Lys-99.

This sequence belongs to the GroES chaperonin family. As to quaternary structure, homoheptamer arranged in a ring structure. 2 heptameric Hsp10 rings interact with a Hsp60 tetradecamer in the structure of a back-to-back double heptameric ring to form the symmetrical football complex.

The protein localises to the mitochondrion matrix. In terms of biological role, co-chaperonin implicated in mitochondrial protein import and macromolecular assembly. Together with Hsp60, facilitates the correct folding of imported proteins. May also prevent misfolding and promote the refolding and proper assembly of unfolded polypeptides generated under stress conditions in the mitochondrial matrix. The functional units of these chaperonins consist of heptameric rings of the large subunit Hsp60, which function as a back-to-back double ring. In a cyclic reaction, Hsp60 ring complexes bind one unfolded substrate protein per ring, followed by the binding of ATP and association with 2 heptameric rings of the co-chaperonin Hsp10. This leads to sequestration of the substrate protein in the inner cavity of Hsp60 where, for a certain period of time, it can fold undisturbed by other cell components. Synchronous hydrolysis of ATP in all Hsp60 subunits results in the dissociation of the chaperonin rings and the release of ADP and the folded substrate protein. This chain is 10 kDa heat shock protein, mitochondrial (Hspe1), found in Rattus norvegicus (Rat).